Here is a 157-residue protein sequence, read N- to C-terminus: MRIGIGIDVHQFAEGRKLIIGGVEVPSPIGLLGHSDADVLLHAISDALLGAAALGDIGKHFPDTSPDYKDADSMELLRHVCKLLEQEGYKPVNVDTMLLLEKPKIAPYIDQMRRNIARCLGLEINAVSVKATTNEKLGYVGRQEGACAHAVCLIENA.

The a divalent metal cation site is built by D8 and H10. 4-CDP-2-C-methyl-D-erythritol 2-phosphate-binding positions include 8–10 (DVH) and 34–35 (HS). H42 is an a divalent metal cation binding site. Residues 56–58 (DIG), 132–135 (TTNE), and R142 each bind 4-CDP-2-C-methyl-D-erythritol 2-phosphate.

It belongs to the IspF family. Homotrimer. It depends on a divalent metal cation as a cofactor.

The enzyme catalyses 4-CDP-2-C-methyl-D-erythritol 2-phosphate = 2-C-methyl-D-erythritol 2,4-cyclic diphosphate + CMP. The protein operates within isoprenoid biosynthesis; isopentenyl diphosphate biosynthesis via DXP pathway; isopentenyl diphosphate from 1-deoxy-D-xylulose 5-phosphate: step 4/6. Involved in the biosynthesis of isopentenyl diphosphate (IPP) and dimethylallyl diphosphate (DMAPP), two major building blocks of isoprenoid compounds. Catalyzes the conversion of 4-diphosphocytidyl-2-C-methyl-D-erythritol 2-phosphate (CDP-ME2P) to 2-C-methyl-D-erythritol 2,4-cyclodiphosphate (ME-CPP) with a corresponding release of cytidine 5-monophosphate (CMP). The chain is 2-C-methyl-D-erythritol 2,4-cyclodiphosphate synthase from Chlorobaculum tepidum (strain ATCC 49652 / DSM 12025 / NBRC 103806 / TLS) (Chlorobium tepidum).